The primary structure comprises 60 residues: Large ribosomal subunit protein uL30 (60 aa).

This sequence belongs to the universal ribosomal protein uL30 family. As to quaternary structure, part of the 50S ribosomal subunit.

The sequence is that of Large ribosomal subunit protein uL30 from Lachnoclostridium phytofermentans (strain ATCC 700394 / DSM 18823 / ISDg) (Clostridium phytofermentans).